A 537-amino-acid chain; its full sequence is Chaperonin GroEL (537 aa).

ATP is bound by residues 29-32 (TLGP), 86-90 (DGTTT), Gly-413, 477-479 (NAA), and Asp-493.

It belongs to the chaperonin (HSP60) family. Forms a cylinder of 14 subunits composed of two heptameric rings stacked back-to-back. Interacts with the co-chaperonin GroES.

It is found in the cytoplasm. The enzyme catalyses ATP + H2O + a folded polypeptide = ADP + phosphate + an unfolded polypeptide.. Functionally, together with its co-chaperonin GroES, plays an essential role in assisting protein folding. The GroEL-GroES system forms a nano-cage that allows encapsulation of the non-native substrate proteins and provides a physical environment optimized to promote and accelerate protein folding. The chain is Chaperonin GroEL from Parascardovia denticolens (Bifidobacterium denticolens).